A 303-amino-acid polypeptide reads, in one-letter code: Probable porphobilinogen deaminase (303 aa).

Cys-240 is modified (S-(dipyrrolylmethanemethyl)cysteine).

The protein belongs to the HMBS family. Dipyrromethane serves as cofactor.

It carries out the reaction 4 porphobilinogen + H2O = hydroxymethylbilane + 4 NH4(+). Its pathway is porphyrin-containing compound metabolism; protoporphyrin-IX biosynthesis; coproporphyrinogen-III from 5-aminolevulinate: step 2/4. Tetrapolymerization of the monopyrrole PBG into the hydroxymethylbilane pre-uroporphyrinogen in several discrete steps. In Hyperthermus butylicus (strain DSM 5456 / JCM 9403 / PLM1-5), this protein is Probable porphobilinogen deaminase.